A 113-amino-acid polypeptide reads, in one-letter code: UPF0482 protein CKO_01577 (113 aa).

The signal sequence occupies residues 1-28; the sequence is MNNTLSKRLCLTAMLALGAVVYTTSAFA. Positions 44-67 are disordered; sequence RQHAAMEKEQWNDTRSLRQKVNTR. Over residues 47 to 59 the composition is skewed to basic and acidic residues; the sequence is AAMEKEQWNDTRS.

The protein belongs to the UPF0482 family.

The polypeptide is UPF0482 protein CKO_01577 (Citrobacter koseri (strain ATCC BAA-895 / CDC 4225-83 / SGSC4696)).